We begin with the raw amino-acid sequence, 341 residues long: Nicotinate-nucleotide--dimethylbenzimidazole phosphoribosyltransferase (341 aa).

The Proton acceptor role is filled by glutamate 310.

Belongs to the CobT family.

The enzyme catalyses 5,6-dimethylbenzimidazole + nicotinate beta-D-ribonucleotide = alpha-ribazole 5'-phosphate + nicotinate + H(+). It functions in the pathway nucleoside biosynthesis; alpha-ribazole biosynthesis; alpha-ribazole from 5,6-dimethylbenzimidazole: step 1/2. Functionally, catalyzes the synthesis of alpha-ribazole-5'-phosphate from nicotinate mononucleotide (NAMN) and 5,6-dimethylbenzimidazole (DMB). The polypeptide is Nicotinate-nucleotide--dimethylbenzimidazole phosphoribosyltransferase (Vibrio cholerae serotype O1 (strain ATCC 39315 / El Tor Inaba N16961)).